The sequence spans 423 residues: MIIDKTLFLKKYLNQSSLNEDLYPIVKDICENVRLHGDDALRNYNQQFDQVETCNLEVAYQTLENAYNRLDSDLREALQQSHARIQSYQESIKWTKQQGTSDCYELYHPLERVGVYVPGGKASYPSTVLMTVTLAKVAGVKNISVVTPPQLNGIPDIVLAACYIAGVDNVYQVGGAQSIAALAYGTETLPKVDKIVGPGNQFVAYAKKYLFGQVGIDQIAGPSEIALIIDDSADLDAIAYDVFAQAEHDELARTFVISEDEALLKQLEQKIQHILPQIERQSIVQASLNDNHFLIHVNNFSEACDLMNQIAPEHASIQTVSPHDYLNHVRYVGALFLGYYSPEVIGDYVAGPSHVLPTNQTARFTNGLSVNDFLTRHSVIDLSKDTFDTVELTARKLAHVEQLYNHEQSIEIRTSKEFNDDKN.

NAD(+)-binding residues include Tyr-116, Gln-177, and Asn-200. Residues Ser-223, Gln-245, and His-248 each contribute to the substrate site. Residues Gln-245 and His-248 each coordinate Zn(2+). Residues Glu-313 and His-314 each act as proton acceptor in the active site. Substrate-binding residues include His-314, Asp-347, Glu-401, and His-406. Residue Asp-347 coordinates Zn(2+). His-406 provides a ligand contact to Zn(2+).

It belongs to the histidinol dehydrogenase family. Zn(2+) is required as a cofactor.

It carries out the reaction L-histidinol + 2 NAD(+) + H2O = L-histidine + 2 NADH + 3 H(+). The protein operates within amino-acid biosynthesis; L-histidine biosynthesis; L-histidine from 5-phospho-alpha-D-ribose 1-diphosphate: step 9/9. In terms of biological role, catalyzes the sequential NAD-dependent oxidations of L-histidinol to L-histidinaldehyde and then to L-histidine. This Staphylococcus saprophyticus subsp. saprophyticus (strain ATCC 15305 / DSM 20229 / NCIMB 8711 / NCTC 7292 / S-41) protein is Histidinol dehydrogenase.